A 102-amino-acid chain; its full sequence is Protein RnfH (102 aa).

Belongs to the UPF0125 (RnfH) family.

The sequence is that of Protein RnfH from Haemophilus influenzae (strain PittEE).